Consider the following 211-residue polypeptide: Probable nicotinate-nucleotide adenylyltransferase (211 aa).

Belongs to the NadD family.

It catalyses the reaction nicotinate beta-D-ribonucleotide + ATP + H(+) = deamido-NAD(+) + diphosphate. Its pathway is cofactor biosynthesis; NAD(+) biosynthesis; deamido-NAD(+) from nicotinate D-ribonucleotide: step 1/1. Functionally, catalyzes the reversible adenylation of nicotinate mononucleotide (NaMN) to nicotinic acid adenine dinucleotide (NaAD). The chain is Probable nicotinate-nucleotide adenylyltransferase from Lactiplantibacillus plantarum (strain ATCC BAA-793 / NCIMB 8826 / WCFS1) (Lactobacillus plantarum).